The primary structure comprises 239 residues: MSEVITQEYTEDGKVLRRIRSFVRREGRLTKGQEAAMKECWPTMGIDYQPELLDWQQVFGNDNPVVLEIGFGMGASLVEMAKNAPEKNFLGIEVHSPGVGACLASAREAGVTNLRVMCHDAVEVFAHMIPDNSLHTLQLFFPDPWHKKRHHKRRIVQLEFAEMVRQKLIIGSGVFHMATDWENYAEHMVEVMNQAPGFANLATDGDYIPRPDERPLTKFEQRGHRLGHGVWDIKYQRTA.

S-adenosyl-L-methionine is bound by residues Glu-68, Glu-93, Asp-120, and Asp-143. Asp-143 is an active-site residue. Substrate contacts are provided by residues Lys-147, Asp-180, and Thr-217–Glu-220.

It belongs to the class I-like SAM-binding methyltransferase superfamily. TrmB family.

It carries out the reaction guanosine(46) in tRNA + S-adenosyl-L-methionine = N(7)-methylguanosine(46) in tRNA + S-adenosyl-L-homocysteine. The protein operates within tRNA modification; N(7)-methylguanine-tRNA biosynthesis. Functionally, catalyzes the formation of N(7)-methylguanine at position 46 (m7G46) in tRNA. This chain is tRNA (guanine-N(7)-)-methyltransferase, found in Vibrio cholerae serotype O1 (strain ATCC 39541 / Classical Ogawa 395 / O395).